Consider the following 188-residue polypeptide: Elongation factor P (188 aa).

This sequence belongs to the elongation factor P family.

Its subcellular location is the cytoplasm. Its pathway is protein biosynthesis; polypeptide chain elongation. Functionally, involved in peptide bond synthesis. Stimulates efficient translation and peptide-bond synthesis on native or reconstituted 70S ribosomes in vitro. Probably functions indirectly by altering the affinity of the ribosome for aminoacyl-tRNA, thus increasing their reactivity as acceptors for peptidyl transferase. This chain is Elongation factor P, found in Methylorubrum extorquens (strain CM4 / NCIMB 13688) (Methylobacterium extorquens).